Here is an 806-residue protein sequence, read N- to C-terminus: Leucine--tRNA ligase (806 aa).

Residues Pro38–His48 carry the 'HIGH' region motif. A 'KMSKS' region motif is present at residues Lys572–Ser576. Lys575 provides a ligand contact to ATP.

The protein belongs to the class-I aminoacyl-tRNA synthetase family.

The protein resides in the cytoplasm. It catalyses the reaction tRNA(Leu) + L-leucine + ATP = L-leucyl-tRNA(Leu) + AMP + diphosphate. The chain is Leucine--tRNA ligase from Helicobacter pylori (strain J99 / ATCC 700824) (Campylobacter pylori J99).